Here is a 378-residue protein sequence, read N- to C-terminus: Chaperone protein DnaJ (378 aa).

Positions 5 to 70 (DYYEVLSVSR…DKKAAYDQFG (66 aa)) constitute a J domain. A CR-type zinc finger spans residues 133-211 (GLTKELRIPT…CHGEGRVEKS (79 aa)). Residues Cys146, Cys149, Cys163, Cys166, Cys185, Cys188, Cys199, and Cys202 each contribute to the Zn(2+) site. 4 CXXCXGXG motif repeats span residues 146-153 (CDSCDGSG), 163-170 (CGTCHGQG), 185-192 (CPTCHGRG), and 199-206 (CNKCHGEG).

It belongs to the DnaJ family. Homodimer. Zn(2+) is required as a cofactor.

It is found in the cytoplasm. Participates actively in the response to hyperosmotic and heat shock by preventing the aggregation of stress-denatured proteins and by disaggregating proteins, also in an autonomous, DnaK-independent fashion. Unfolded proteins bind initially to DnaJ; upon interaction with the DnaJ-bound protein, DnaK hydrolyzes its bound ATP, resulting in the formation of a stable complex. GrpE releases ADP from DnaK; ATP binding to DnaK triggers the release of the substrate protein, thus completing the reaction cycle. Several rounds of ATP-dependent interactions between DnaJ, DnaK and GrpE are required for fully efficient folding. Also involved, together with DnaK and GrpE, in the DNA replication of plasmids through activation of initiation proteins. This is Chaperone protein DnaJ from Shewanella sediminis (strain HAW-EB3).